The primary structure comprises 931 residues: GPI ethanolamine phosphate transferase 1 (931 aa).

Residue M1 is a topological domain, cytoplasmic. Residues 2–24 (LLFFTLGLLIHFVFFASIFDIYF) traverse the membrane as a helical segment. At 25–442 (TSPLVHGMTP…SYYHTYDRFF (418 aa)) the chain is on the lumenal side. 3 N-linked (GlcNAc...) asparagine glycosylation sites follow: N128, N192, and N350. The helical transmembrane segment at 443–463 (LGVNVVIGFVGWISYASLLII) threads the bilayer. The Cytoplasmic portion of the chain corresponds to 464–482 (KSHSNLIKGVSKEVKKPSH). A helical transmembrane segment spans residues 483–503 (LLPCSFVAIGILVAFFLLIQA). The Lumenal segment spans residues 504-508 (CPWTY). Residues 509–529 (YVYGLLPLPIWYAVLREFQVI) traverse the membrane as a helical segment. The Cytoplasmic portion of the chain corresponds to 530-543 (QDLVVSVLTYPLSH). The helical transmembrane segment at 544 to 564 (FVGYLLAFTLGIEVLVLSFFY) threads the bilayer. A topological domain (lumenal) is located at residue R565. A helical transmembrane segment spans residues 566 to 586 (YMLTAGLTAFAAWPFLTRLWT). At 587 to 591 (RAKMT) the chain is on the cytoplasmic side. Residues 592–612 (SLSWTFFSLLLAVFPLMPVVG) traverse the membrane as a helical segment. Residues 613–618 (RKPDIS) are Lumenal-facing. The helical transmembrane segment at 619 to 639 (LVMGAGLLVLLLSLCVVTSLM) threads the bilayer. Residues 640-649 (KRKDSFIKEE) lie on the Cytoplasmic side of the membrane. The helical transmembrane segment at 650–670 (LLVHLLQVLSTVLSMYVVYST) threads the bilayer. The Lumenal portion of the chain corresponds to 671–685 (QSSLLRKQGLPLMNQ). Residues 686–706 (IISWATLASSLVVPLLSSPVL) traverse the membrane as a helical segment. Topologically, residues 707–723 (FQRLFSILLSLMSTYLL) are cytoplasmic. A helical membrane pass occupies residues 724-744 (LSTGYEALFPLVLSCLMFVWI). Over 745-786 (NIEQETLQQSGVCCKQKLTSIQFSYNTDITQFRQLYLDDIRR) the chain is Lumenal. Residues 787–807 (AFFLVFFLVTAFFGTGNIASI) form a helical membrane-spanning segment. The Cytoplasmic segment spans residues 808–824 (NSFDLASVYCFLTVFSP). A helical membrane pass occupies residues 825–845 (FMMGALMMWKILIPFVLVMCA). The Lumenal portion of the chain corresponds to 846–858 (FEAVQLTTQLSSK). A helical transmembrane segment spans residues 859 to 879 (SLFLIVLVISDIMALHFFFLV). Residues 880 to 894 (KDYGSWLDIGTSISH) are Cytoplasmic-facing. A helical membrane pass occupies residues 895–915 (YVIVMSMTIFLVFLNGLAQLL). The Lumenal segment spans residues 916 to 931 (TTKKLRLCGKPKSHFM).

It belongs to the PIGG/PIGN/PIGO family. PIGN subfamily.

Its subcellular location is the endoplasmic reticulum membrane. It participates in glycolipid biosynthesis; glycosylphosphatidylinositol-anchor biosynthesis. In terms of biological role, ethanolamine phosphate transferase that catalyzes an ethanolamine phosphate (EtNP) transfer from phosphatidylethanolamine (PE) to the 2-OH position of the first alpha-1,4-linked mannose of the alpha-D-Man-(1-&gt;6)-alpha-D-Man-(1-&gt;4)-alpha-D-GlcN-(1-&gt;6)-(1-radyl,2-acyl-sn-glycero-3-phospho)-2-acyl-inositol (also termed H3) intermediate to generate an alpha-D-Man-(1-&gt;6)-2-PEtn-alpha-D-Man-(1-&gt;4)-alpha-D-GlcN-(1-&gt;6)-(1-radyl,2-acyl-sn-glycero-3-phospho)-2-acyl-inositol and participates in the eighth step of the glycosylphosphatidylinositol-anchor biosynthesis. May act as suppressor of replication stress and chromosome missegregation. This Homo sapiens (Human) protein is GPI ethanolamine phosphate transferase 1.